The primary structure comprises 63 residues: Large ribosomal subunit protein bL28 (63 aa).

The protein belongs to the bacterial ribosomal protein bL28 family.

The chain is Large ribosomal subunit protein bL28 from Clostridium acetobutylicum (strain ATCC 824 / DSM 792 / JCM 1419 / IAM 19013 / LMG 5710 / NBRC 13948 / NRRL B-527 / VKM B-1787 / 2291 / W).